The following is a 355-amino-acid chain: Fructose-1,6-bisphosphatase (355 aa).

AMP is bound by residues 25 to 30 (ILDQQH) and 37 to 41 (TGEFS). Residues Asp-78 and Glu-107 each coordinate Mg(2+). 121–122 (KY) contacts AMP. Positions 127, 129, and 130 each coordinate Mg(2+). 130-133 (DGSS) lines the substrate pocket. Lys-149 is an AMP binding site. Residues 230–233 (NEGN), 263–268 (RYIGSM), Tyr-284, and 294–296 (KLR) each bind substrate. Mg(2+) is bound at residue Glu-300.

The protein belongs to the FBPase class 1 family. In terms of assembly, homotetramer. Requires Mg(2+) as cofactor.

The catalysed reaction is beta-D-fructose 1,6-bisphosphate + H2O = beta-D-fructose 6-phosphate + phosphate. The protein operates within carbohydrate biosynthesis; gluconeogenesis. With respect to regulation, subject to complex allosteric regulation. The enzyme can assume an active R-state, or an inactive T-state. Intermediate conformations may exist. AMP acts as allosteric inhibitor. AMP binding affects the turnover of bound substrate and not the affinity for substrate. This is Fructose-1,6-bisphosphatase (FBP1) from Kluyveromyces lactis (strain ATCC 8585 / CBS 2359 / DSM 70799 / NBRC 1267 / NRRL Y-1140 / WM37) (Yeast).